The sequence spans 461 residues: MESSVKASVDSETESSPGVNETAAASGQRLSEKTRQQADQPKTQDDLVEQNSSYVQDSPSKKRKLDVEIILDEKHSEDDGGASKRSKLERGGGSEDEPSPGGLTERKRKLQPQDALETQTRKFQKLEEGHSSAVAAHYNELQEVGLVKRSQSRIFYLRNFNNWIKSILIGEILEKVRQRKNRDITVLDLGCGKGGDLLKWRKGRISRLVCADIADISMKQCQQRYEDMKCRRDNEYIFSAEFITADCSKELLVEKFHDPEMYFDICSCQFACHYSFESLEQADMMLRNACGRLNPGGYFIGTTPNSFELIRRLEASETESFGNEIYTVKFQKKGNYPLFGCKYDFNLEGVVDVPEFLVYFPLLTEMAKKYNMKLIYKKTFLEFYEEKIKNNENKMLLKRMQALESYPANENSKLASEKAGDYAHAAEYMKNSQVRLPLGTLSKSEWEATSIYLVFAFEKQQ.

A disordered region spans residues 1–117 (MESSVKASVD…RKLQPQDALE (117 aa)). Phosphoserine is present on residues Ser-11, Ser-15, Ser-16, and Ser-58. Polar residues-rich tracts occupy residues 14–29 (ESSP…SGQR) and 49–58 (EQNSSYVQDS). Positions 65–93 (LDVEIILDEKHSEDDGGASKRSKLERGGG) are enriched in basic and acidic residues. Phosphoserine is present on residues Ser-94 and Ser-99. The short motif at 107–109 (KRK) is the Nuclear localization signal element. One can recognise an mRNA cap 0 methyltransferase domain in the interval 152-460 (SRIFYLRNFN…IYLVFAFEKQ (309 aa)). Residue 161–162 (NN) coordinates mRNA. 6 residues coordinate S-adenosyl-L-methionine: Lys-165, Gly-190, Asp-212, Asp-246, Gln-269, and Tyr-274.

Belongs to the class I-like SAM-binding methyltransferase superfamily. mRNA cap 0 methyltransferase family. As to quaternary structure, interacts with importin alpha, leading to stimulate both RNA-binding and methyltransferase activity. Interaction with importin alpha and beta is required for its nuclear localization, importin beta dissociating in response to RanGTP, allowing RNMT-importin alpha to bind RNA substrates. Interacts with elongating form of polymerase II and RNGTT. Interacts with RAMAC, this interaction significantly enhances RNA-binding and cap methyltransferase activity.

Its subcellular location is the nucleus. It catalyses the reaction a 5'-end (5'-triphosphoguanosine)-ribonucleoside in mRNA + S-adenosyl-L-methionine = a 5'-end (N(7)-methyl 5'-triphosphoguanosine)-ribonucleoside in mRNA + S-adenosyl-L-homocysteine. With respect to regulation, methyltransferase activity is activated by RAMAC. Catalytic subunit of the mRNA-capping methyltransferase RNMT:RAMAC complex that methylates the N7 position of the added guanosine to the 5'-cap structure of mRNAs. Binds RNA containing 5'-terminal GpppC. In Rattus norvegicus (Rat), this protein is mRNA cap guanine-N(7) methyltransferase (Rnmt).